A 320-amino-acid polypeptide reads, in one-letter code: GTP 3',8-cyclase (320 aa).

Residues 5–225 enclose the Radical SAM core domain; that stretch reads QFDRKINYLR…IQLIKKDEKA (221 aa). Arg-14 serves as a coordination point for GTP. Residues Cys-21 and Cys-25 each coordinate [4Fe-4S] cluster. Tyr-27 provides a ligand contact to S-adenosyl-L-methionine. Position 28 (Cys-28) interacts with [4Fe-4S] cluster. A GTP-binding site is contributed by Arg-64. Gly-68 contributes to the S-adenosyl-L-methionine binding site. Residue Thr-95 coordinates GTP. An S-adenosyl-L-methionine-binding site is contributed by Ser-119. GTP is bound at residue Lys-155. Met-189 is a binding site for S-adenosyl-L-methionine. [4Fe-4S] cluster-binding residues include Cys-248 and Cys-251. Residue 253–255 participates in GTP binding; that stretch reads RIR. Cys-265 serves as a coordination point for [4Fe-4S] cluster.

The protein belongs to the radical SAM superfamily. MoaA family. As to quaternary structure, monomer and homodimer. [4Fe-4S] cluster is required as a cofactor.

The catalysed reaction is GTP + AH2 + S-adenosyl-L-methionine = (8S)-3',8-cyclo-7,8-dihydroguanosine 5'-triphosphate + 5'-deoxyadenosine + L-methionine + A + H(+). Its pathway is cofactor biosynthesis; molybdopterin biosynthesis. Functionally, catalyzes the cyclization of GTP to (8S)-3',8-cyclo-7,8-dihydroguanosine 5'-triphosphate. In Campylobacter jejuni subsp. doylei (strain ATCC BAA-1458 / RM4099 / 269.97), this protein is GTP 3',8-cyclase.